The sequence spans 465 residues: Cysteine--tRNA ligase (465 aa).

Residue Cys30 participates in Zn(2+) binding. A 'HIGH' region motif is present at residues 32 to 42 (ITVYDYCHVGH). Cys214, His239, and Glu243 together coordinate Zn(2+). Residues 271-275 (KMSKS) carry the 'KMSKS' region motif. Lys274 contributes to the ATP binding site.

Belongs to the class-I aminoacyl-tRNA synthetase family. As to quaternary structure, monomer. The cofactor is Zn(2+).

It is found in the cytoplasm. The enzyme catalyses tRNA(Cys) + L-cysteine + ATP = L-cysteinyl-tRNA(Cys) + AMP + diphosphate. The protein is Cysteine--tRNA ligase of Burkholderia cenocepacia (strain HI2424).